The sequence spans 303 residues: Glycine--tRNA ligase alpha subunit (303 aa).

The protein belongs to the class-II aminoacyl-tRNA synthetase family. In terms of assembly, tetramer of two alpha and two beta subunits.

The protein resides in the cytoplasm. The enzyme catalyses tRNA(Gly) + glycine + ATP = glycyl-tRNA(Gly) + AMP + diphosphate. The chain is Glycine--tRNA ligase alpha subunit from Cronobacter sakazakii (strain ATCC BAA-894) (Enterobacter sakazakii).